The following is a 638-amino-acid chain: Zinc finger and BTB domain-containing protein 22 (638 aa).

The region spanning 57–121 (CDVSIRVQGR…AYTGRLSMAA (65 aa)) is the BTB domain. Disordered stretches follow at residues 171 to 223 (CASV…STSQ), 229 to 248 (SAAG…APVV), 335 to 354 (DDED…GEPE), and 367 to 451 (EPAD…HGAV). Residues 189–210 (SVRSHTSSRASENQSPSSSNYF) are compositionally biased toward polar residues. Ser-203 carries the post-translational modification Phosphoserine. A C2H2-type 1; atypical zinc finger spans residues 483–504 (FLCHCGKAFSHKSMRDRHVNMH). C2H2-type zinc fingers lie at residues 510–532 (FDCP…MKTH) and 538–559 (YECS…HRGH). The segment at 564-638 (HRMGVGGVGS…DFSGGGGAAH (75 aa)) is disordered.

Belongs to the krueppel C2H2-type zinc-finger protein family.

It is found in the nucleus. May be involved in transcriptional regulation. The sequence is that of Zinc finger and BTB domain-containing protein 22 (Zbtb22) from Mus musculus (Mouse).